The primary structure comprises 365 residues: Saoe class I histocompatibility antigen, C alpha chain (365 aa).

A signal peptide spans methionine 1–alanine 24. Residues glycine 25 to alanine 114 form an alpha-1 region. The Extracellular portion of the chain corresponds to glycine 25–isoleucine 308. An N-linked (GlcNAc...) asparagine glycan is attached at asparagine 110. Residues glycine 115–alanine 206 form an alpha-2 region. 2 cysteine pairs are disulfide-bonded: cysteine 125/cysteine 188 and cysteine 227/cysteine 283. The segment at glutamate 207–tryptophan 298 is alpha-3. Residues proline 209–arginine 297 form the Ig-like C1-type domain. A connecting peptide region spans residues glutamate 299–isoleucine 308. A helical membrane pass occupies residues methionine 309 to tryptophan 332. The Cytoplasmic portion of the chain corresponds to arginine 333–valine 365. The disordered stretch occupies residues serine 337–valine 365. Positions glutamine 346 to serine 359 are enriched in polar residues. Serine 356 and serine 359 each carry phosphoserine.

Belongs to the MHC class I family. In terms of assembly, heterodimer of an alpha chain and a beta chain (beta-2-microglobulin).

It is found in the membrane. Its function is as follows. Involved in the presentation of foreign antigens to the immune system. The chain is Saoe class I histocompatibility antigen, C alpha chain from Saguinus oedipus (Cotton-top tamarin).